Here is a 914-residue protein sequence, read N- to C-terminus: Isoleucine--tRNA ligase (914 aa).

Residues 64 to 74 carry the 'HIGH' region motif; it reads PYANGNFHLGH. An L-isoleucyl-5'-AMP-binding site is contributed by E557. The short motif at 598-602 is the 'KMSKS' region element; sequence PMSKS. ATP is bound at residue K601. Zn(2+) is bound by residues C889, C892, C906, and C909.

The protein belongs to the class-I aminoacyl-tRNA synthetase family. IleS type 1 subfamily. Monomer. It depends on Zn(2+) as a cofactor.

The protein localises to the cytoplasm. It carries out the reaction tRNA(Ile) + L-isoleucine + ATP = L-isoleucyl-tRNA(Ile) + AMP + diphosphate. Catalyzes the attachment of isoleucine to tRNA(Ile). As IleRS can inadvertently accommodate and process structurally similar amino acids such as valine, to avoid such errors it has two additional distinct tRNA(Ile)-dependent editing activities. One activity is designated as 'pretransfer' editing and involves the hydrolysis of activated Val-AMP. The other activity is designated 'posttransfer' editing and involves deacylation of mischarged Val-tRNA(Ile). This Leptospira interrogans serogroup Icterohaemorrhagiae serovar copenhageni (strain Fiocruz L1-130) protein is Isoleucine--tRNA ligase.